A 203-amino-acid polypeptide reads, in one-letter code: Small ribosomal subunit protein uS4c (203 aa).

The 69-residue stretch at 91–159 (MRLDNIIFRL…ISKNIEFYQK (69 aa)) folds into the S4 RNA-binding domain.

It belongs to the universal ribosomal protein uS4 family. Part of the 30S ribosomal subunit. Contacts protein S5. The interaction surface between S4 and S5 is involved in control of translational fidelity.

The protein localises to the plastid. The protein resides in the chloroplast. In terms of biological role, one of the primary rRNA binding proteins, it binds directly to 16S rRNA where it nucleates assembly of the body of the 30S subunit. Its function is as follows. With S5 and S12 plays an important role in translational accuracy. In Lopidium concinnum (Moss), this protein is Small ribosomal subunit protein uS4c (rps4).